The chain runs to 448 residues: Phosphoglucosamine mutase (448 aa).

The active-site Phosphoserine intermediate is the S100. S100, D240, D242, and D244 together coordinate Mg(2+). The residue at position 100 (S100) is a Phosphoserine.

It belongs to the phosphohexose mutase family. Mg(2+) is required as a cofactor. Post-translationally, activated by phosphorylation.

The enzyme catalyses alpha-D-glucosamine 1-phosphate = D-glucosamine 6-phosphate. Its function is as follows. Catalyzes the conversion of glucosamine-6-phosphate to glucosamine-1-phosphate. In Bacillus mycoides (strain KBAB4) (Bacillus weihenstephanensis), this protein is Phosphoglucosamine mutase.